The following is a 451-amino-acid chain: Probable metal transport system membrane protein CT_069 (451 aa).

8 helical membrane passes run 14–34 (SFLA…ILLV), 38–58 (PLLS…GALL), 70–90 (WVII…ISFL), 100–120 (SALC…VSYV), 145–165 (TEAK…WWWY), 192–212 (VLVF…ILLI), 233–253 (ILIL…YFSV), and 269–289 (ILPT…LCLI). Residues 432 to 451 (PDYDPHQREIPKRTRKSDGC) form a disordered region. The span at 434–451 (YDPHQREIPKRTRKSDGC) shows a compositional bias: basic and acidic residues.

It belongs to the ABC-3 integral membrane protein family.

It is found in the cell inner membrane. Functionally, part of an ATP-driven transport system CT_067/CT_068/CT_069/CT_070 for a metal. The protein is Probable metal transport system membrane protein CT_069 of Chlamydia trachomatis serovar D (strain ATCC VR-885 / DSM 19411 / UW-3/Cx).